The primary structure comprises 297 residues: Pyridoxal 5'-phosphate synthase subunit Pdx1 (297 aa).

Asp27 is a binding site for D-ribose 5-phosphate. Catalysis depends on Lys84, which acts as the Schiff-base intermediate with D-ribose 5-phosphate. Residue Gly156 coordinates D-ribose 5-phosphate. Arg168 is a binding site for D-glyceraldehyde 3-phosphate. Residues Gly217 and 238 to 239 (GS) each bind D-ribose 5-phosphate.

Belongs to the PdxS/SNZ family. As to quaternary structure, homohexamer and homododecamer. In the presence of Pdx2, forms a dodecamer of heterodimers.

It catalyses the reaction aldehydo-D-ribose 5-phosphate + D-glyceraldehyde 3-phosphate + L-glutamine = pyridoxal 5'-phosphate + L-glutamate + phosphate + 3 H2O + H(+). Its pathway is cofactor biosynthesis; pyridoxal 5'-phosphate biosynthesis. In terms of biological role, catalyzes the formation of pyridoxal 5'-phosphate from ribose 5-phosphate (RBP), glyceraldehyde 3-phosphate (G3P) and ammonia. The ammonia is provided by Pdx2. Can also use ribulose 5-phosphate and dihydroxyacetone phosphate as substrates, resulting from enzyme-catalyzed isomerization of RBP and G3P, respectively. The chain is Pyridoxal 5'-phosphate synthase subunit Pdx1 from Plasmodium berghei.